We begin with the raw amino-acid sequence, 505 residues long: ATP synthase subunit alpha (505 aa).

171–178 (GDRQTGKT) provides a ligand contact to ATP.

Belongs to the ATPase alpha/beta chains family. F-type ATPases have 2 components, CF(1) - the catalytic core - and CF(0) - the membrane proton channel. CF(1) has five subunits: alpha(3), beta(3), gamma(1), delta(1), epsilon(1). CF(0) has three main subunits: a(1), b(2) and c(9-12). The alpha and beta chains form an alternating ring which encloses part of the gamma chain. CF(1) is attached to CF(0) by a central stalk formed by the gamma and epsilon chains, while a peripheral stalk is formed by the delta and b chains.

It localises to the cell inner membrane. It carries out the reaction ATP + H2O + 4 H(+)(in) = ADP + phosphate + 5 H(+)(out). Produces ATP from ADP in the presence of a proton gradient across the membrane. The alpha chain is a regulatory subunit. This Nitratiruptor sp. (strain SB155-2) protein is ATP synthase subunit alpha.